The sequence spans 218 residues: Elongation factor Ts (218 aa).

Positions 82–85 (TDFV) are involved in Mg(2+) ion dislocation from EF-Tu.

The protein belongs to the EF-Ts family.

Its subcellular location is the cytoplasm. Functionally, associates with the EF-Tu.GDP complex and induces the exchange of GDP to GTP. It remains bound to the aminoacyl-tRNA.EF-Tu.GTP complex up to the GTP hydrolysis stage on the ribosome. The polypeptide is Elongation factor Ts (tsf) (Synechocystis sp. (strain ATCC 27184 / PCC 6803 / Kazusa)).